Consider the following 546-residue polypeptide: MTPGEVRRLYFIIRTFLSYGLDELIPRMRLTLPLRLWRYSLFWMPNRHKDKLLGERLRLALQELGPVWIKFGQMLSTRRDLFPPQIADQLALLQDKVAPFDGRLAKAQIEEAMGGLPVEAWFDDFDIQPLASASIAQVHTARLKSNGKEVVIKVIRPDILPVIQADLKLIYRLARWVPRLLPDGRRLRPTEVVREYEKTLIDELNLLRESANAIQLRRNFENSPMLYIPEVYSDYCSQNMMVMERIYGIPVSDVAALEKNGTNMKLLAERGVKVFFTQVFRDSFFHADMHPGNIFVSHEHPENPQYIGIDCGIVGSLNKEDKRYLAENFIAFFNRDYRKVAELHVDSGWVPPDTNVEDFEFAIRTVCEPIFEKPLAEISFGHVLLNLFNTARRFNMEVQPQLVLLQKTLLYVEGVGRQLYPQLDLWKTAKPFLESWIKDQVGIPALTRALKEKAPFWVEKMPEIPELVYDSLRQGKYLQHSVDKIARELQVNHVRQSQSRYLLGIGATLLLSGSFLLVNRPEWGLMPGWLMVGGVVVWLVGWRKTR.

The Protein kinase domain maps to Asp-124–Leu-502. ATP-binding positions include Leu-130–Val-138 and Lys-153. The active-site Proton acceptor is Asp-288. Transmembrane regions (helical) follow at residues Tyr-501–Pro-521 and Glu-522–Trp-542.

The protein belongs to the ABC1 family. UbiB subfamily.

The protein resides in the cell inner membrane. It participates in cofactor biosynthesis; ubiquinone biosynthesis [regulation]. Its function is as follows. Is probably a protein kinase regulator of UbiI activity which is involved in aerobic coenzyme Q (ubiquinone) biosynthesis. The polypeptide is Probable protein kinase UbiB (Salmonella agona (strain SL483)).